Consider the following 64-residue polypeptide: Ribosome biogenesis protein Nop10 (64 aa).

It belongs to the NOP10 family.

Functionally, involved in ribosome biogenesis; more specifically in 18S rRNA pseudouridylation and in cleavage of pre-rRNA. This chain is Ribosome biogenesis protein Nop10, found in Ignicoccus hospitalis (strain KIN4/I / DSM 18386 / JCM 14125).